A 525-amino-acid polypeptide reads, in one-letter code: tRNA(Ile)-lysidine synthase (525 aa).

32–37 contributes to the ATP binding site; that stretch reads SGGRDS.

Belongs to the tRNA(Ile)-lysidine synthase family.

Its subcellular location is the cytoplasm. The enzyme catalyses cytidine(34) in tRNA(Ile2) + L-lysine + ATP = lysidine(34) in tRNA(Ile2) + AMP + diphosphate + H(+). Its function is as follows. Ligates lysine onto the cytidine present at position 34 of the AUA codon-specific tRNA(Ile) that contains the anticodon CAU, in an ATP-dependent manner. Cytidine is converted to lysidine, thus changing the amino acid specificity of the tRNA from methionine to isoleucine. In Psychrobacter sp. (strain PRwf-1), this protein is tRNA(Ile)-lysidine synthase.